Reading from the N-terminus, the 344-residue chain is Dihydroorotase (344 aa).

The Zn(2+) site is built by His13 and His15. Substrate-binding positions include 15–17 (HLR) and Asn41. Residues Lys99, His136, and His174 each coordinate Zn(2+). Position 99 is an N6-carboxylysine (Lys99). His136 lines the substrate pocket. Leu219 serves as a coordination point for substrate. Asp247 is a Zn(2+) binding site. Residue Asp247 is part of the active site. 2 residues coordinate substrate: His251 and Ala263.

The protein belongs to the metallo-dependent hydrolases superfamily. DHOase family. Class II DHOase subfamily. As to quaternary structure, homodimer. Requires Zn(2+) as cofactor.

It carries out the reaction (S)-dihydroorotate + H2O = N-carbamoyl-L-aspartate + H(+). Its pathway is pyrimidine metabolism; UMP biosynthesis via de novo pathway; (S)-dihydroorotate from bicarbonate: step 3/3. Catalyzes the reversible cyclization of carbamoyl aspartate to dihydroorotate. The polypeptide is Dihydroorotase (Acinetobacter baumannii (strain SDF)).